We begin with the raw amino-acid sequence, 512 residues long: Cytoplasmic tRNA 2-thiolation protein 2-A (512 aa).

It belongs to the CTU2/NCS2 family.

The protein resides in the cytoplasm. Its pathway is tRNA modification; 5-methoxycarbonylmethyl-2-thiouridine-tRNA biosynthesis. In terms of biological role, plays a central role in 2-thiolation of mcm(5)S(2)U at tRNA wobble positions of tRNA(Lys), tRNA(Glu) and tRNA(Gln). May act by forming a heterodimer with ctu1/atpbd3 that ligates sulfur from thiocarboxylated urm1 onto the uridine of tRNAs at wobble position. The sequence is that of Cytoplasmic tRNA 2-thiolation protein 2-A (ctu2-a) from Xenopus laevis (African clawed frog).